The chain runs to 274 residues: MPLNLKYFVPEQRYIILKTKGGGLVSTDREDLEMRVRDVLIKYLGKNVYDSDPRARQIIDTLSRNYRDVESWIRDSEFVMRSRAILKYYPHGDPYEEVKVIKTHNEATCFPIATLAYFIVTANCPTGCCGCGCHAGCNGSVGHAPYLMVGSDTSTLTYCLMPNLAQGYTQSPSATSYYWATGVLGSSPGSGGQVYAVVTSTWNAGVLPSGTIGEVGAFQFMINQLANSVDYGTGVPNQGYVMYARVSSASGAFSPISYTNTAPFTASITLYMAV.

This is an uncharacterized protein from Acidianus hospitalis (AFV-1).